Consider the following 286-residue polypeptide: L-cysteine S-thiosulfotransferase subunit SoxA (286 aa).

Residues 1–27 (MKKTIQRGLFTGALVLMTAMTAKPANA) form the signal peptide. Cysteine 106 and cysteine 137 are disulfide-bonded. The Cytochrome c domain maps to 180–286 (DAYMKGKKFF…LKYNGPASRK (107 aa)). Cysteine 200 and histidine 204 together coordinate heme. Arginine 243 provides a ligand contact to substrate. Cysteine 247 contributes to the heme binding site. Cysteine 247 functions as the Cysteine persulfide intermediate in the catalytic mechanism.

Belongs to the SoxA family. As to quaternary structure, heterodimer of SoxA and SoxX. The SoxAX complex interacts with CT1020, SoxAX-binding protein SaxB (SoxK); this interaction seems to be between SoxA and CT1020 and stimulates catalytic activity of the SoxAX complex. Heme serves as cofactor. Cysteine persulfide at Cys-247.

Its subcellular location is the periplasm. It catalyses the reaction L-cysteinyl-[SoxY protein] + thiosulfate + 2 Fe(III)-[cytochrome c] = S-sulfosulfanyl-L-cysteinyl-[SoxY protein] + 2 Fe(II)-[cytochrome c] + 2 H(+). It carries out the reaction S-sulfanyl-L-cysteinyl-[SoxY protein] + thiosulfate + 2 Fe(III)-[cytochrome c] = S-(2-sulfodisulfanyl)-L-cysteinyl-[SoxY protein] + 2 Fe(II)-[cytochrome c] + 2 H(+). In terms of biological role, C-type monoheme cytochrome, which is part of the SoxAX cytochrome complex involved in sulfur oxidation. The SoxAX complex catalyzes the formation of a heterodisulfide bond between the conserved cysteine residue on a sulfur carrier SoxYZ complex subunit SoxY and thiosulfate or other inorganic sulfur substrates. This leads to the liberation of two electrons, which may be transferred from the SoxAX complex to another cytochrome c and which then may be used for reductive CO(2) fixation. This Chlorobaculum tepidum (strain ATCC 49652 / DSM 12025 / NBRC 103806 / TLS) (Chlorobium tepidum) protein is L-cysteine S-thiosulfotransferase subunit SoxA.